The primary structure comprises 106 residues: Acylphosphatase-2 (106 aa).

The 91-residue stretch at 16–106 (SVDYEVFGTV…LEYSDFSIRY (91 aa)) folds into the Acylphosphatase-like domain. Active-site residues include arginine 31 and asparagine 49. Serine 100 is modified (phosphoserine).

Belongs to the acylphosphatase family.

The catalysed reaction is an acyl phosphate + H2O = a carboxylate + phosphate + H(+). This Mus musculus (Mouse) protein is Acylphosphatase-2 (Acyp2).